The following is a 131-amino-acid chain: Protein SOB FIVE-LIKE 4 (131 aa).

Disordered stretches follow at residues 1 to 21 and 40 to 131; these read MDKE…SSPI and IYNY…YRMK. The segment covering 8 to 18 has biased composition (polar residues); it reads SSESGWTTYLS. The SOFL-A motif lies at 11-16; sequence SGWTTY. Positions 46-58 are enriched in basic and acidic residues; the sequence is KVEHEEERNKDSD. The SOFL-B signature appears at 60-69; it reads SMASDASSGP. A compositionally biased stretch (basic and acidic residues) spans 79-109; sequence KALDLKNGKNEGNSKSKNDDDHHNHYHDGKK. The Nuclear localization signal signature appears at 107 to 114; the sequence is GKKTSNSY. The span at 114-131 shows a compositional bias: basic residues; sequence YRKKDKKKRENKSTYRMK.

The protein belongs to the SOFL plant protein family. As to expression, expressed, at low levels, in seedlings, roots, flowers and siliques.

It is found in the cytoplasm. The protein localises to the nucleus. In terms of biological role, involved in cytokinin-mediated development. The chain is Protein SOB FIVE-LIKE 4 from Arabidopsis thaliana (Mouse-ear cress).